A 468-amino-acid polypeptide reads, in one-letter code: 6-phospho-beta-galactosidase (468 aa).

D-galactose 6-phosphate-binding residues include Gln19, His116, Asn159, Glu160, and Asn297. The Proton donor role is filled by Glu160. Glu375 serves as the catalytic Nucleophile. The D-galactose 6-phosphate site is built by Ser428, Trp429, Lys435, and Tyr437.

The protein belongs to the glycosyl hydrolase 1 family.

The enzyme catalyses a 6-phospho-beta-D-galactoside + H2O = D-galactose 6-phosphate + an alcohol. It participates in carbohydrate metabolism; lactose degradation; D-galactose 6-phosphate and beta-D-glucose from lactose 6-phosphate: step 1/1. The polypeptide is 6-phospho-beta-galactosidase (Streptococcus pyogenes serotype M1).